A 228-amino-acid polypeptide reads, in one-letter code: Small ribosomal subunit protein uS3 (228 aa).

In terms of domain architecture, KH type-2 spans 39–107 (TREYLQDKLK…PVHINIEEIR (69 aa)).

The protein belongs to the universal ribosomal protein uS3 family. In terms of assembly, part of the 30S ribosomal subunit. Forms a tight complex with proteins S10 and S14.

In terms of biological role, binds the lower part of the 30S subunit head. Binds mRNA in the 70S ribosome, positioning it for translation. The protein is Small ribosomal subunit protein uS3 of Pseudomonas entomophila (strain L48).